We begin with the raw amino-acid sequence, 144 residues long: Conopressin-conophysin (144 aa).

An N-terminal signal peptide occupies residues 1 to 27 (MTRSALQMGRLTLVLCLLLQLVLVTQA). A disulfide bond links Cys28 and Cys33. The residue at position 36 (Asp36) is an Aspartic acid 1-amide. Positions 37–44 (GERDVDGR) are excised as a propeptide. Disulfide bonds link Cys50/Cys90, Cys53/Cys64, Cys58/Cys80, Cys65/Cys70, Cys97/Cys117, Cys109/Cys129, and Cys118/Cys123. Positions 131–144 (KESKSGIRVGCQRS) are excised as a propeptide.

Belongs to the vasopressin/oxytocin family. As to expression, expressed by the venom duct.

It is found in the secreted. The polypeptide is Conopressin-conophysin (Conus bayani (Bayan's cone)).